The primary structure comprises 85 residues: Small ribosomal subunit protein uS17 (85 aa).

This sequence belongs to the universal ribosomal protein uS17 family. In terms of assembly, part of the 30S ribosomal subunit.

In terms of biological role, one of the primary rRNA binding proteins, it binds specifically to the 5'-end of 16S ribosomal RNA. The protein is Small ribosomal subunit protein uS17 of Pseudoalteromonas translucida (strain TAC 125).